A 341-amino-acid chain; its full sequence is Anthranilate phosphoribosyltransferase (341 aa).

5-phospho-alpha-D-ribose 1-diphosphate contacts are provided by residues G79, 82–83 (GD), T87, 89–92 (NIST), 107–115 (KHGNRAASS), and S119. G79 contacts anthranilate. S91 contributes to the Mg(2+) binding site. Residue N110 coordinates anthranilate. R165 provides a ligand contact to anthranilate. Mg(2+) contacts are provided by D224 and E225.

Belongs to the anthranilate phosphoribosyltransferase family. Homodimer. It depends on Mg(2+) as a cofactor.

The catalysed reaction is N-(5-phospho-beta-D-ribosyl)anthranilate + diphosphate = 5-phospho-alpha-D-ribose 1-diphosphate + anthranilate. The protein operates within amino-acid biosynthesis; L-tryptophan biosynthesis; L-tryptophan from chorismate: step 2/5. Catalyzes the transfer of the phosphoribosyl group of 5-phosphorylribose-1-pyrophosphate (PRPP) to anthranilate to yield N-(5'-phosphoribosyl)-anthranilate (PRA). The polypeptide is Anthranilate phosphoribosyltransferase (Dehalococcoides mccartyi (strain ATCC BAA-2266 / KCTC 15142 / 195) (Dehalococcoides ethenogenes (strain 195))).